The primary structure comprises 284 residues: Bifunctional protein FolD (284 aa).

NADP(+) is bound by residues 166–168 (GAS) and Ile-232.

It belongs to the tetrahydrofolate dehydrogenase/cyclohydrolase family. As to quaternary structure, homodimer.

The catalysed reaction is (6R)-5,10-methylene-5,6,7,8-tetrahydrofolate + NADP(+) = (6R)-5,10-methenyltetrahydrofolate + NADPH. It carries out the reaction (6R)-5,10-methenyltetrahydrofolate + H2O = (6R)-10-formyltetrahydrofolate + H(+). It functions in the pathway one-carbon metabolism; tetrahydrofolate interconversion. Functionally, catalyzes the oxidation of 5,10-methylenetetrahydrofolate to 5,10-methenyltetrahydrofolate and then the hydrolysis of 5,10-methenyltetrahydrofolate to 10-formyltetrahydrofolate. This is Bifunctional protein FolD from Shewanella amazonensis (strain ATCC BAA-1098 / SB2B).